Reading from the N-terminus, the 264-residue chain is MLRLSNAAVITTNAILALIGLAALSFSVYVYVQGPSQCQRFVQNPLIVTAALLFFISSLGLIAALYGSHIIITLYLFFLFLSILLLLVLSVFIFLVTNPTAGKALSGRGIGNVKTGDYQNWIGNHFLRGKNWEGITKCLSDSRVCKRFGPRDIDFDSKHLSNVQFGCCRPPVECGFESKNATWWTVPATATTAIIGDCKAWSNTQRQLCYACESCKIGVLKGIRKRWRILIVVNLLLILLVVFLYSCGCCVRKNNRVPWKRRFF.

The Cytoplasmic portion of the chain corresponds to 1-13 (MLRLSNAAVITTN). Residues 14 to 34 (AILALIGLAALSFSVYVYVQG) form a helical membrane-spanning segment. Topologically, residues 35-45 (PSQCQRFVQNP) are extracellular. The chain crosses the membrane as a helical span at residues 46–66 (LIVTAALLFFISSLGLIAALY). At 67–75 (GSHIIITLY) the chain is on the cytoplasmic side. Residues 76–96 (LFFLFLSILLLLVLSVFIFLV) form a helical membrane-spanning segment. Residues 97 to 228 (TNPTAGKALS…VLKGIRKRWR (132 aa)) lie on the Extracellular side of the membrane. Residue N180 is glycosylated (N-linked (GlcNAc...) asparagine). Residues 229-249 (ILIVVNLLLILLVVFLYSCGC) traverse the membrane as a helical segment. At 250 to 264 (CVRKNNRVPWKRRFF) the chain is on the cytoplasmic side.

It belongs to the tetraspanin (TM4SF) family.

Its subcellular location is the membrane. Functionally, may be involved in the regulation of cell differentiation. The protein is Tetraspanin-12 (TET12) of Arabidopsis thaliana (Mouse-ear cress).